A 382-amino-acid polypeptide reads, in one-letter code: Polyadenylate-binding protein 5 (382 aa).

RRM domains are found at residues 18 to 96 (AALY…WSQP), 106 to 182 (GNIF…RFKF), 199 to 276 (TNVF…RAQK), and 302 to 378 (VPIY…LGQA).

It is found in the cytoplasm. Binds the poly(A) tail of mRNA. May be involved in cytoplasmic regulatory processes of mRNA metabolism. Can probably bind to cytoplasmic RNA sequences other than poly(A) in vivo. This is Polyadenylate-binding protein 5 (PABPC5) from Macaca mulatta (Rhesus macaque).